A 566-amino-acid polypeptide reads, in one-letter code: Erythroid membrane-associated protein (566 aa).

Positions 1-29 (MERPSPCGSWLVGCLFTIAVFQPPVQVLG) are cleaved as a signal peptide. Residues 30–139 (DAGKVYIAPL…SSREDNVTLQ (110 aa)) enclose the Ig-like V-type domain. Residues 30–246 (DAGKVYIAPL…PERGSLSSPA (217 aa)) are Extracellular-facing. Cys-47 and Cys-123 are joined by a disulfide. N-linked (GlcNAc...) asparagine glycosylation is found at Asn-135 and Asn-214. The helical transmembrane segment at 247 to 267 (VALSVVLPVLGLLILLGIWLI) threads the bilayer. The Cytoplasmic segment spans residues 268 to 566 (CKQKKSKEKL…ALKGLKVPSL (299 aa)). The B30.2/SPRY domain occupies 311 to 509 (KLKRAAANAG…LIICTELQKS (199 aa)). A Phosphoserine modification is found at Ser-509.

This sequence belongs to the immunoglobulin superfamily. BTN/MOG family. Glycosylated. Expressed in spleen and bone marrow.

The protein resides in the cell membrane. Its subcellular location is the cytoplasm. Possible role as a cell-adhesion or receptor molecule of erythroid cells. This chain is Erythroid membrane-associated protein (Ermap), found in Mus musculus (Mouse).